The following is a 90-amino-acid chain: Mitochondrial import inner membrane translocase subunit Tim10 (90 aa).

Positions 29 to 54 match the Twin CX3C motif motif; it reads CHRKCVPPHYKEAELSKGESVCLDRC. Cystine bridges form between Cys-29–Cys-54 and Cys-33–Cys-50.

Belongs to the small Tim family. As to quaternary structure, heterohexamer; composed of 3 copies of TIMM9 and 3 copies of TIMM10/TIM10A, named soluble 70 kDa complex. The complex forms a 6-bladed alpha-propeller structure and associates with the TIMM22 component of the TIM22 complex. Interacts with multi-pass transmembrane proteins in transit. Also forms a complex composed of TIMM9, TIMM10/TIM10A and FXC1/TIM10B.

It is found in the mitochondrion inner membrane. Its function is as follows. Mitochondrial intermembrane chaperone that participates in the import and insertion of multi-pass transmembrane proteins into the mitochondrial inner membrane. May also be required for the transfer of beta-barrel precursors from the TOM complex to the sorting and assembly machinery (SAM complex) of the outer membrane. Acts as a chaperone-like protein that protects the hydrophobic precursors from aggregation and guide them through the mitochondrial intermembrane space. The protein is Mitochondrial import inner membrane translocase subunit Tim10 (TIMM10) of Bos taurus (Bovine).